Reading from the N-terminus, the 788-residue chain is Structure-specific endonuclease subunit SLX4 (788 aa).

Disordered regions lie at residues 59 to 86 (LQNE…DNNR), 562 to 584 (KRQP…HDNS), and 599 to 622 (DLVN…PSSP). The segment covering 562–573 (KRQPVDSENEIR) has biased composition (basic and acidic residues). The span at 612–622 (DTSVLQVPSSP) shows a compositional bias: polar residues.

It belongs to the SLX4 family. As to quaternary structure, forms a heterodimer with SLX1. Phosphorylated in response to DNA damage.

It is found in the nucleus. Functionally, regulatory subunit of the SLX1-SLX4 structure-specific endonuclease that resolves DNA secondary structures generated during DNA repair and recombination. Has endonuclease activity towards branched DNA substrates, introducing single-strand cuts in duplex DNA close to junctions with ss-DNA. The sequence is that of Structure-specific endonuclease subunit SLX4 from Debaryomyces hansenii (strain ATCC 36239 / CBS 767 / BCRC 21394 / JCM 1990 / NBRC 0083 / IGC 2968) (Yeast).